The sequence spans 184 residues: Probable N-acetyltransferase san (184 aa).

The N-acetyltransferase domain occupies 6 to 155 (IELGDVTPHN…DAHVLQKTLR (150 aa)). Tyr31 is a substrate binding site. Lys47 is modified (N6-acetyllysine; by autocatalysis). Tyr73 is a catalytic residue. Residue Met75 coordinates substrate. Position 77-90 (77-90 (LGCLSPYRRLGIGT)) interacts with acetyl-CoA. His112 is an active-site residue. 117-126 (NNGAIEFYKK) lines the CoA pocket. The segment at 138–141 (YYKR) is substrate. Residues 157–174 (TAPNSNSTATSTTANSNS) are compositionally biased toward low complexity. The tract at residues 157–176 (TAPNSNSTATSTTANSNSRS) is disordered.

Belongs to the acetyltransferase family. In terms of assembly, component of an acetyltransferase complex, at least composed of san, Ard1 and Nat1. Post-translationally, autoacetylated.

The protein resides in the cytoplasm. It catalyses the reaction N-terminal L-methionyl-L-alanyl-[protein] + acetyl-CoA = N-terminal N(alpha)-acetyl-L-methionyl-L-alanyl-[protein] + CoA + H(+). The enzyme catalyses N-terminal L-methionyl-L-seryl-[protein] + acetyl-CoA = N-terminal N(alpha)-acetyl-L-methionyl-L-seryl-[protein] + CoA + H(+). It carries out the reaction N-terminal L-methionyl-L-valyl-[protein] + acetyl-CoA = N-terminal N(alpha)-acetyl-L-methionyl-L-valyl-[protein] + CoA + H(+). The catalysed reaction is N-terminal L-methionyl-L-threonyl-[protein] + acetyl-CoA = N-terminal N(alpha)-acetyl-L-methionyl-L-threonyl-[protein] + CoA + H(+). It catalyses the reaction N-terminal L-methionyl-L-lysyl-[protein] + acetyl-CoA = N-terminal N(alpha)-acetyl-L-methionyl-L-lysyl-[protein] + CoA + H(+). The enzyme catalyses N-terminal L-methionyl-L-leucyl-[protein] + acetyl-CoA = N-terminal N(alpha)-acetyl-L-methionyl-L-leucyl-[protein] + CoA + H(+). It carries out the reaction N-terminal L-methionyl-L-phenylalanyl-[protein] + acetyl-CoA = N-terminal N(alpha)-acetyl-L-methionyl-L-phenylalanyl-[protein] + CoA + H(+). The catalysed reaction is N-terminal L-methionyl-L-tyrosyl-[protein] + acetyl-CoA = N-terminal N(alpha)-acetyl-L-methionyl-L-tyrosyl-[protein] + CoA + H(+). Its function is as follows. N-alpha-acetyltransferase that acetylates the N-terminus of proteins that retain their initiating methionine. Has a broad substrate specificity: able to acetylate the initiator methionine of most peptides. Also displays N-epsilon-acetyltransferase activity by mediating acetylation of the side chain of specific lysines on proteins. Autoacetylates. Required for the establishment of sister chromatid cohesion and couple the processes of cohesion and DNA replication to ensure that only sister chromatids become paired together. Required for the interaction between Scc1/vtd and SMC3, possibly by mediating N-terminal acetylation of Scc1/vtd. In terms of biological role, (Microbial infection) Required for optimal replication of E.chaffeensis in the immune tissues, hemocytes, and fat body. This is Probable N-acetyltransferase san (san) from Drosophila melanogaster (Fruit fly).